We begin with the raw amino-acid sequence, 492 residues long: Histone-lysine N-methyltransferase SUVR4 (492 aa).

Residues E112–R138 are disordered. The span at T113 to N133 shows a compositional bias: polar residues. C196, C197, C200, C204, C213, C281, C285, C287, and C291 together coordinate Zn(2+). One can recognise a Pre-SET domain in the interval C196–G299. Residues C302–M435 form the SET domain. S-adenosyl-L-methionine contacts are provided by residues K313–W315 and N391–H392. C394 contributes to the Zn(2+) binding site. Y434 is an S-adenosyl-L-methionine binding site. The 17-residue stretch at K446–I462 folds into the Post-SET domain. Zn(2+) is bound by residues C450, C452, and C457. Residues K463–K492 are disordered.

This sequence belongs to the class V-like SAM-binding methyltransferase superfamily. Histone-lysine methyltransferase family. Interacts with ubiquitin.

The protein localises to the nucleus. It localises to the chromosome. The enzyme catalyses N(6)-methyl-L-lysyl(9)-[histone H3] + S-adenosyl-L-methionine = N(6),N(6)-dimethyl-L-lysyl(9)-[histone H3] + S-adenosyl-L-homocysteine + H(+). The catalysed reaction is N(6),N(6)-dimethyl-L-lysyl(9)-[histone H3] + S-adenosyl-L-methionine = N(6),N(6),N(6)-trimethyl-L-lysyl(9)-[histone H3] + S-adenosyl-L-homocysteine + H(+). Functionally, histone methyltransferase that converts monomethylated 'Lys-9' of histone H3 (H3K9me1) to dimethylated 'Lys-9' (H3K9me2) in the absence of bound ubiquitin, and to trimethylated 'Lys-9' (H3K9me3) in the presence of bound ubiquitin. Acts in a locus-specific manner and contributes to the transcriptional silencing of pseudogenes and transposons. H3 'Lys-9' methylation represents a specific tag for epigenetic transcriptional repression. The protein is Histone-lysine N-methyltransferase SUVR4 (SUVR4) of Arabidopsis thaliana (Mouse-ear cress).